The primary structure comprises 343 residues: Protein RecA (343 aa).

An ATP-binding site is contributed by 66 to 73 (GPESSGKT).

It belongs to the RecA family.

The protein resides in the cytoplasm. Can catalyze the hydrolysis of ATP in the presence of single-stranded DNA, the ATP-dependent uptake of single-stranded DNA by duplex DNA, and the ATP-dependent hybridization of homologous single-stranded DNAs. It interacts with LexA causing its activation and leading to its autocatalytic cleavage. In Nitrosomonas europaea (strain ATCC 19718 / CIP 103999 / KCTC 2705 / NBRC 14298), this protein is Protein RecA.